The following is a 505-amino-acid chain: Ribose import ATP-binding protein RbsA 2 (505 aa).

ABC transporter domains follow at residues 13–249 (LALE…VGRD) and 259–503 (VRAG…TGRA). 45–52 (GENGAGKS) provides a ligand contact to ATP.

The protein belongs to the ABC transporter superfamily. Ribose importer (TC 3.A.1.2.1) family. In terms of assembly, the complex is composed of an ATP-binding protein (RbsA), two transmembrane proteins (RbsC) and a solute-binding protein (RbsB).

Its subcellular location is the cell membrane. The catalysed reaction is D-ribose(out) + ATP + H2O = D-ribose(in) + ADP + phosphate + H(+). Its function is as follows. Part of the ABC transporter complex RbsABC involved in ribose import. Responsible for energy coupling to the transport system. This chain is Ribose import ATP-binding protein RbsA 2, found in Streptomyces avermitilis (strain ATCC 31267 / DSM 46492 / JCM 5070 / NBRC 14893 / NCIMB 12804 / NRRL 8165 / MA-4680).